The following is a 1118-amino-acid chain: Cytospin-A (1118 aa).

Disordered stretches follow at residues 1 to 50, 75 to 175, 294 to 324, and 359 to 391; these read MKKA…AALS, KKSN…DNQI, SLSPEITPGNQSDGGGTLTSSVEGSAPGSVE, and SSDDALDAPSSSESEGVPSIERSRKGSSGNASE. Composition is skewed to low complexity over residues 34–48, 80–90, and 99–113; these read APTGGKPVKPGAAAA, SSAAPSAPAPA, and KSSTGTSSSAKRSTS. The segment covering 120–131 has biased composition (basic and acidic residues); the sequence is SSTRERLRERTR. Residues 133 to 145 are compositionally biased toward polar residues; the sequence is NQSKKLPSVSQGA. Residues 158–171 show a composition bias toward basic and acidic residues; it reads TATEGDIRMSKSKS. Residues 168–281 adopt a coiled-coil conformation; it reads KSKSDNQISD…LNALGFSLEQ (114 aa). Polar residues predominate over residues 294 to 304; sequence SLSPEITPGNQ. Positions 359–373 are enriched in low complexity; that stretch reads SSDDALDAPSSSESE. Ser-385, Ser-386, and Ser-390 each carry phosphoserine. Coiled coils occupy residues 395–450 and 488–808; these read ACLT…MESL and RYME…RGRV. Ser-869, Ser-882, and Ser-888 each carry phosphoserine. The disordered stretch occupies residues 916–999; sequence EHLLRTSSTS…STRSRIREER (84 aa). Positions 947-957 are enriched in basic and acidic residues; that stretch reads RSSEEMKRDIS. Over residues 972–992 the composition is skewed to low complexity; it reads TTSPQLSLSSSPTASVTPSTR. Positions 1012-1117 constitute a Calponin-homology (CH) domain; sequence GSKRNALLKW…YVTAIYKYFE (106 aa).

It belongs to the cytospin-A family. As to quaternary structure, may interact with both microtubules and actin cytoskeleton.

The protein resides in the cytoplasm. Its subcellular location is the cytoskeleton. It is found in the spindle. The protein localises to the cell junction. It localises to the gap junction. Its function is as follows. Involved in cytokinesis and spindle organization. May play a role in actin cytoskeleton organization and microtubule stabilization and hence required for proper cell adhesion and migration. This chain is Cytospin-A (Specc1l), found in Rattus norvegicus (Rat).